Here is a 658-residue protein sequence, read N- to C-terminus: Deoxynucleoside triphosphate triphosphohydrolase SAMHD1 (658 aa).

Residues 23-68 are disordered; sequence SQPRVSEVAMQSAPLEQPAKRPRCDGSPRTPPSTPPATANLSADDD. A Phosphoserine modification is found at Ser-49. The residue at position 52 (Thr-52) is a Phosphothreonine. Ser-55 is modified (phosphoserine). The residue at position 56 (Thr-56) is a Phosphothreonine. Phosphoserine is present on residues Ser-64 and Ser-125. Residues 77–142 enclose the SAM domain; it reads WEPEDVCSFL…IECIQQLSQS (66 aa). Residues Lys-148 and Val-149 each contribute to the GTP site. DGTP is bound at residue Asn-151. The GTP site is built by Asp-169, Gln-174, and Arg-177. 2 residues coordinate dGTP: Leu-182 and Val-188. Positions 196–348 constitute an HD domain; that stretch reads RFEHSLGVGY…GIDVDKWDYF (153 aa). Mn(2+) is bound by residues His-199, His-238, and Asp-239. DGTP contacts are provided by Asp-239, His-247, His-265, and Glu-266. His-265 is an active-site residue. Asp-343 lines the Mn(2+) pocket. Positions 347, 351, 365, 395, 397, 401, 417, 419, and 420 each coordinate dGTP. The GTP site is built by Arg-494 and Lys-498. Lys-509 is covalently cross-linked (Glycyl lysine isopeptide (Lys-Gly) (interchain with G-Cter in SUMO2)). Lys-565 provides a ligand contact to GTP. Lys-565 provides a ligand contact to dGTP. Thr-634 bears the Phosphothreonine mark. The residue at position 634 (Thr-634) is a (Microbial infection) Phosphothreonine.

This sequence belongs to the SAMHD1 family. As to quaternary structure, homodimer; in absence of GTP and dNTP. Homotetramer; in GTP- and dNTP-bound form. Interacts with MRE11; leading to stimulate the exonuclease activity of MRE11. Interacts with RBBP8/CtIP. Interacts with RBBP8/CtIP. Interacts (via its C-terminus) with CD81. Requires Zn(2+) as cofactor. In terms of processing, phosphorylation at Thr-634 by CDK1 acts as a switch to control deoxynucleoside triphosphate (dNTPase)-dependent and -independent functions. Phosphorylation at Thr-634 takes place in cycling cells: it reduces the stability of the homotetramer, impairing the dNTPase activity and subsequent ability to restrict infection by viruses. It also inhibits ability to suppress LINE-1 retrotransposon activity. In contrast, phosphorylation at Thr-634 promotes DNA end resection at stalled replication forks in response to DNA damage. (Microbial infection) Phosphorylation at Thr-634 by mouse cytomegalovirus kinase M97 leads to a reduced level of dNTP hydrolase activity and the loss of viral restriction. Post-translationally, not phosphorylated by CDK1 at the C-terminus.

It localises to the nucleus. It is found in the chromosome. The catalysed reaction is a 2'-deoxyribonucleoside 5'-triphosphate + H2O = a 2'-deoxyribonucleoside + triphosphate + H(+). It catalyses the reaction dATP + H2O = 2'-deoxyadenosine + triphosphate + H(+). The enzyme catalyses dCTP + H2O = 2'-deoxycytidine + triphosphate + H(+). It carries out the reaction dGTP + H2O = 2'-deoxyguanosine + triphosphate + H(+). The catalysed reaction is dTTP + H2O = thymidine + triphosphate + H(+). Its activity is regulated as follows. Allosterically activated and regulated via the combined actions of GTP and dNTPs (dATP, dGTP, dTTP and dCTP): Allosteric site 1 binds GTP, while allosteric site 2 binds dNTP. Allosteric activation promotes the formation of highly active homotetramers. Isoform 1: Phosphorylation at Thr-634 impairs homotetramerization, thereby inhibiting dNTPase activity, leading to reduced ability to restrict infection by viruses. Functionally, protein that acts both as a host restriction factor involved in defense response to virus and as a regulator of DNA end resection at stalled replication forks. Has deoxynucleoside triphosphate (dNTPase) activity, which is required to restrict infection by viruses: dNTPase activity reduces cellular dNTP levels to levels too low for retroviral reverse transcription to occur, blocking early-stage virus replication in dendritic and other myeloid cells. Likewise, suppresses LINE-1 retrotransposon activity. In addition to virus restriction, dNTPase activity acts as a regulator of DNA precursor pools by regulating dNTP pools. Phosphorylation at Thr-634 acts as a switch to control dNTPase-dependent and -independent functions: it inhibits dNTPase activity and ability to restrict infection by viruses, while it promotes DNA end resection at stalled replication forks. Functions during S phase at stalled DNA replication forks to promote the resection of gapped or reversed forks: acts by stimulating the exonuclease activity of MRE11, activating the ATR-CHK1 pathway and allowing the forks to restart replication. Its ability to promote degradation of nascent DNA at stalled replication forks is required to prevent induction of type I interferons, thereby preventing chronic inflammation. Ability to promote DNA end resection at stalled replication forks is independent of dNTPase activity. Enhances immunoglobulin hypermutation in B-lymphocytes by promoting transversion mutation. This is Deoxynucleoside triphosphate triphosphohydrolase SAMHD1 from Mus musculus (Mouse).